The chain runs to 308 residues: Acetaldehyde dehydrogenase (308 aa).

Position 25-28 (25-28 (TGAI)) interacts with NAD(+). The active-site Acyl-thioester intermediate is the Cys139. Asn279 contributes to the NAD(+) binding site.

This sequence belongs to the acetaldehyde dehydrogenase family.

The enzyme catalyses acetaldehyde + NAD(+) + CoA = acetyl-CoA + NADH + H(+). The chain is Acetaldehyde dehydrogenase from Streptomyces griseus subsp. griseus (strain JCM 4626 / CBS 651.72 / NBRC 13350 / KCC S-0626 / ISP 5235).